The following is a 371-amino-acid chain: tRNA-specific 2-thiouridylase MnmA (371 aa).

ATP-binding positions include 13–20 (GMSGGVDS) and Met39. The segment at 99–101 (NPD) is interaction with target base in tRNA. The Nucleophile role is filled by Cys104. Residues Cys104 and Cys200 are joined by a disulfide bond. Gly128 contacts ATP. The tract at residues 150-152 (KDQ) is interaction with tRNA. Cys200 acts as the Cysteine persulfide intermediate in catalysis. Residues 308–309 (RY) are interaction with tRNA.

It belongs to the MnmA/TRMU family.

Its subcellular location is the cytoplasm. It catalyses the reaction S-sulfanyl-L-cysteinyl-[protein] + uridine(34) in tRNA + AH2 + ATP = 2-thiouridine(34) in tRNA + L-cysteinyl-[protein] + A + AMP + diphosphate + H(+). Catalyzes the 2-thiolation of uridine at the wobble position (U34) of tRNA, leading to the formation of s(2)U34. The protein is tRNA-specific 2-thiouridylase MnmA of Bacillus cytotoxicus (strain DSM 22905 / CIP 110041 / 391-98 / NVH 391-98).